A 255-amino-acid polypeptide reads, in one-letter code: Small ribosomal subunit protein uS2 (255 aa).

Residues arginine 231 to alanine 255 are disordered. Residues alanine 236–alanine 255 are compositionally biased toward acidic residues.

It belongs to the universal ribosomal protein uS2 family.

In Geobacter sp. (strain M21), this protein is Small ribosomal subunit protein uS2.